The following is a 392-amino-acid chain: MESSEPLVLDVGNLKRGEIIINMGPQHPSTHGVLRLEILTDGEIVKDVIPHMGYLHRCYEKHAEKLPYNQVIPFVDRMDYLAAMNSEHAYAMGVERMLGIENDIPKRVEYIRVLVAELNRISSHFVAIGTYGLDIGAFTPFLWVMRDREHINRLLEWVSGARMLYNYIWVGGLFYDLPVGFEERCKDFISYLKPKLAELQKVIIDNKIFIERTANIGVLPLDLAINYGITGPMLRASGLKFDLRKVDAYSVYPEIDFDIPVGTGAVGTTGDCWDRTHVRVAECFESVKIIEQCLEKLLGEHKRTREFDPQAIVPKKIRPKVMDFYVRAENPKGELGFFFRTTGNTDIPFRCKVRAPSFVNLSVLQAISKNVMIADLVAILGSFDIVMGEIDR.

Belongs to the complex I 49 kDa subunit family. NDH-1 is composed of 14 different subunits. Subunits NuoB, C, D, E, F, and G constitute the peripheral sector of the complex.

It is found in the cell inner membrane. It catalyses the reaction a quinone + NADH + 5 H(+)(in) = a quinol + NAD(+) + 4 H(+)(out). Functionally, NDH-1 shuttles electrons from NADH, via FMN and iron-sulfur (Fe-S) centers, to quinones in the respiratory chain. The immediate electron acceptor for the enzyme in this species is believed to be a menaquinone. Couples the redox reaction to proton translocation (for every two electrons transferred, four hydrogen ions are translocated across the cytoplasmic membrane), and thus conserves the redox energy in a proton gradient. This Cytophaga hutchinsonii (strain ATCC 33406 / DSM 1761 / CIP 103989 / NBRC 15051 / NCIMB 9469 / D465) protein is NADH-quinone oxidoreductase subunit D 1.